The primary structure comprises 243 residues: Adenosylcobinamide-GDP ribazoletransferase (243 aa).

The next 5 membrane-spanning stretches (helical) occupy residues 31–51 (LLFYPLVGLLFGVILWALNIA), 57–77 (LLLHAALLLAVWVLLSGALHL), 109–129 (IAVVTLVLVLLLKFAALLALI), 135–155 (MALIIVPLIGRAALLGLFLTT), and 188–208 (LVIAGFNAVVALLLAVIVFIW).

This sequence belongs to the CobS family. Mg(2+) serves as cofactor.

The protein localises to the cell inner membrane. It carries out the reaction alpha-ribazole + adenosylcob(III)inamide-GDP = adenosylcob(III)alamin + GMP + H(+). The enzyme catalyses alpha-ribazole 5'-phosphate + adenosylcob(III)inamide-GDP = adenosylcob(III)alamin 5'-phosphate + GMP + H(+). Its pathway is cofactor biosynthesis; adenosylcobalamin biosynthesis; adenosylcobalamin from cob(II)yrinate a,c-diamide: step 7/7. In terms of biological role, joins adenosylcobinamide-GDP and alpha-ribazole to generate adenosylcobalamin (Ado-cobalamin). Also synthesizes adenosylcobalamin 5'-phosphate from adenosylcobinamide-GDP and alpha-ribazole 5'-phosphate. The sequence is that of Adenosylcobinamide-GDP ribazoletransferase from Pseudomonas fluorescens (strain Pf0-1).